Consider the following 59-residue polypeptide: MNIDELTKRINELHKKHKEEGLSEDEHKEREELRKEYINRFKSNLREQLKGIEPKNKKN.

The segment at methionine 1–arginine 30 is disordered.

It belongs to the UPF0291 family.

The protein localises to the cytoplasm. The polypeptide is UPF0291 protein CPR_1073 (Clostridium perfringens (strain SM101 / Type A)).